The primary structure comprises 300 residues: Integrin-binding sialoprotein (300 aa).

The disordered stretch occupies residues 41–258 (RFPVQSSSDS…YEQTGAHEYD (218 aa)). Phosphoserine occurs at positions 46, 51, 59, 60, 82, and 90. Low complexity predominate over residues 46–58 (SSSDSSEENGNGD). The segment covering 59 to 92 (SSEEEEEEEENSNEEENNEENEDSDGNEDEDSEA) has biased composition (acidic residues). Over residues 93 to 102 (ENITLSTTTL) the composition is skewed to polar residues. Asn-94 is a glycosylation site (N-linked (GlcNAc...) asparagine). Basic and acidic residues predominate over residues 125–136 (KAGDIGKKSAKE). The span at 137–160 (EESDEDEEEEEENEENEAEVDDNE) shows a compositional bias: acidic residues. Position 139 is a phosphoserine (Ser-139). 3 stretches are compositionally biased toward polar residues: residues 161-173 (QGTN…STEV), 193-202 (VTEAQGTTVA), and 229-243 (ISGT…TTTP). N-linked (GlcNAc...) asparagine glycosylation is found at Asn-164 and Asn-169. Ser-266 carries the phosphoserine modification. The short motif at 272 to 274 (RGD) is the Integrin-binding motif element. A Phosphoserine modification is found at Ser-293. Sulfotyrosine is present on residues Tyr-299 and Tyr-300.

In terms of assembly, monomer. Interacts with integrins; the interaction promotes cell adhesion.

It localises to the secreted. Its function is as follows. Binds tightly to hydroxyapatite. Appears to form an integral part of the mineralized matrix. Probably important to cell-matrix interaction. Promotes adhesion and migration of various cells via the alpha-V/beta-3 integrin receptor (ITGAV:ITGB3). This Sus scrofa (Pig) protein is Integrin-binding sialoprotein (IBSP).